Consider the following 403-residue polypeptide: Na(+)/H(+) antiporter NhaA (403 aa).

Helical transmembrane passes span 23-43 (AFFL…PWAA), 66-86 (VAAW…ILEI), 101-121 (VALP…TYLL), 132-152 (GWAI…LALG), 161-181 (AWLM…IALF), 184-204 (GSMY…LIGA), 219-239 (GILL…AGVI), 257-277 (WVSS…FGFM), 297-317 (LGIM…ATLL), 333-353 (GMLF…LFVA), and 363-383 (IAPA…TGWF).

The protein belongs to the NhaA Na(+)/H(+) (TC 2.A.33) antiporter family.

Its subcellular location is the cell inner membrane. The enzyme catalyses Na(+)(in) + 2 H(+)(out) = Na(+)(out) + 2 H(+)(in). Functionally, na(+)/H(+) antiporter that extrudes sodium in exchange for external protons. The chain is Na(+)/H(+) antiporter NhaA from Gluconobacter oxydans (strain 621H) (Gluconobacter suboxydans).